The primary structure comprises 562 residues: Putative transport protein Spro_1639 (562 aa).

A run of 5 helical transmembrane segments spans residues 8–28 (LLNG…LCLG), 37–57 (LGNS…HFAI), 66–86 (FMLF…SIFF), 94–114 (MLAL…GKLF), and 158–178 (HLSL…IFGA). RCK C-terminal domains follow at residues 202 to 288 (LDTD…SFRN) and 290 to 373 (KEVF…KIGF). Transmembrane regions (helical) follow at residues 383–403 (LLAF…TIQF), 406–426 (FSFG…LGFL), 447–467 (FGLM…IGNS), 475–495 (MLIA…LFGA), and 541–561 (IANV…PGIL).

This sequence belongs to the AAE transporter (TC 2.A.81) family. YbjL subfamily.

It localises to the cell membrane. The polypeptide is Putative transport protein Spro_1639 (Serratia proteamaculans (strain 568)).